Here is a 202-residue protein sequence, read N- to C-terminus: Recombination protein RecR (202 aa).

The C4-type zinc-finger motif lies at 59–74 (CSVCFHLSAEPVCEIC). In terms of domain architecture, Toprim spans 82–176 (HTICVVADSR…KVTRIAFGLP (95 aa)).

This sequence belongs to the RecR family.

Functionally, may play a role in DNA repair. It seems to be involved in an RecBC-independent recombinational process of DNA repair. It may act with RecF and RecO. The sequence is that of Recombination protein RecR from Thermosynechococcus vestitus (strain NIES-2133 / IAM M-273 / BP-1).